Consider the following 268-residue polypeptide: Phosphate import ATP-binding protein PstB 2 (268 aa).

The 242-residue stretch at 22–263 (MALTGVNFYY…PKVKRTEDYI (242 aa)) folds into the ABC transporter domain. An ATP-binding site is contributed by 54–61 (GPSGCGKS).

Belongs to the ABC transporter superfamily. Phosphate importer (TC 3.A.1.7) family. In terms of assembly, the complex is composed of two ATP-binding proteins (PstB), two transmembrane proteins (PstC and PstA) and a solute-binding protein (PstS).

It localises to the cell inner membrane. It carries out the reaction phosphate(out) + ATP + H2O = ADP + 2 phosphate(in) + H(+). Its function is as follows. Part of the ABC transporter complex PstSACB involved in phosphate import. Responsible for energy coupling to the transport system. The polypeptide is Phosphate import ATP-binding protein PstB 2 (Rhizobium johnstonii (strain DSM 114642 / LMG 32736 / 3841) (Rhizobium leguminosarum bv. viciae)).